Reading from the N-terminus, the 252-residue chain is tRNA uridine(34) hydroxylase (252 aa).

In terms of domain architecture, Rhodanese spans 129-223 (QGRPVVMLDT…YFEETGGKGF (95 aa)). The active-site Cysteine persulfide intermediate is the Cys183.

The protein belongs to the TrhO family.

The enzyme catalyses uridine(34) in tRNA + AH2 + O2 = 5-hydroxyuridine(34) in tRNA + A + H2O. In terms of biological role, catalyzes oxygen-dependent 5-hydroxyuridine (ho5U) modification at position 34 in tRNAs. In Bordetella petrii (strain ATCC BAA-461 / DSM 12804 / CCUG 43448), this protein is tRNA uridine(34) hydroxylase.